The sequence spans 491 residues: 2,3-bisphosphoglycerate-independent phosphoglycerate mutase (491 aa).

2 residues coordinate Mn(2+): Asp-11 and Ser-61. The Phosphoserine intermediate role is filled by Ser-61. Substrate is bound by residues His-118, 147–148, Arg-177, Arg-183, 247–250, and Lys-320; these read RD and RNDR. Mn(2+) contacts are provided by Asp-386, His-390, Asp-427, His-428, and His-445.

The protein belongs to the BPG-independent phosphoglycerate mutase family. Monomer. It depends on Mn(2+) as a cofactor.

It catalyses the reaction (2R)-2-phosphoglycerate = (2R)-3-phosphoglycerate. It participates in carbohydrate degradation; glycolysis; pyruvate from D-glyceraldehyde 3-phosphate: step 3/5. Its function is as follows. Catalyzes the interconversion of 2-phosphoglycerate and 3-phosphoglycerate. The protein is 2,3-bisphosphoglycerate-independent phosphoglycerate mutase of Helicobacter pylori (strain ATCC 700392 / 26695) (Campylobacter pylori).